The following is a 408-amino-acid chain: MMMLDDYIAKSKLSESLTSTVWLAKHKLTGEEAVMKCFDLSKLNRNLRDCLNNELEFLSSVDHPNIIRLLHVSQDDDFLVMVLEYCDGGTLSSYIQRYGRVEEDIAKRFMKQIGAGLEIIHDNHIIHRDLKPENILIDGSGDDLVLKIADFSLARKLHPGKYLETVCGSPFYMAPEVLQFQRYNEKADMWSVGAILFELLHGYPPFRGNNNVQVLRNIKSSTALPFSRLILQQMHPDCIDVCSRLLSINPAATLGIEDFPFLGRIKNSRVWVKDTTFSSRQHGTRERKVATINGRLQFDLSQDAYLPQRLLENLMYIYNTIEMARVTGVPTSYLISRGESIKVLSQLLRKAKQKTWFFQMLRSWNLNKELMKVQLYVGGFISPTYSFTYSSITSNILINISNDIYSHC.

Residues 7-272 form the Protein kinase domain; the sequence is YIAKSKLSES…GRIKNSRVWV (266 aa). ATP contacts are provided by residues 13–21 and Lys-36; that span reads LSESLTSTV. Residue Asp-129 is the Proton acceptor of the active site.

It belongs to the protein kinase superfamily. Ser/Thr protein kinase family.

The protein localises to the cytoplasmic vesicle. It localises to the autophagosome. In terms of biological role, serine/threonine protein kinase involved in autophagy. The ATG1-ATG13 protein kinase complex regulates downstream events required for autophagosome enclosure and/or vacuolar delivery. The chain is Serine/threonine-protein kinase ATG1t from Arabidopsis thaliana (Mouse-ear cress).